Reading from the N-terminus, the 125-residue chain is Small ribosomal subunit protein uS12 (125 aa).

3-methylthioaspartic acid is present on Asp89. The interval 105–125 (QGVKDRKQSRSKYGAKKPKAK) is disordered. Positions 113 to 125 (SRSKYGAKKPKAK) are enriched in basic residues.

Belongs to the universal ribosomal protein uS12 family. In terms of assembly, part of the 30S ribosomal subunit. Contacts proteins S8 and S17. May interact with IF1 in the 30S initiation complex.

With S4 and S5 plays an important role in translational accuracy. Functionally, interacts with and stabilizes bases of the 16S rRNA that are involved in tRNA selection in the A site and with the mRNA backbone. Located at the interface of the 30S and 50S subunits, it traverses the body of the 30S subunit contacting proteins on the other side and probably holding the rRNA structure together. The combined cluster of proteins S8, S12 and S17 appears to hold together the shoulder and platform of the 30S subunit. In Delftia acidovorans (strain DSM 14801 / SPH-1), this protein is Small ribosomal subunit protein uS12.